Here is a 746-residue protein sequence, read N- to C-terminus: Histone-lysine N-methyltransferase EZH2 (746 aa).

Residues 1 to 340 (MGQTGKKSEK…AKEFAAALTA (340 aa)) are interaction with DNMT1, DNMT3A and DNMT3B. Position 21 is a phosphoserine; by PKB/AKT1 (Ser21). The segment at 39–68 (KSMFSSNRQKILERTEILNQEWKQRRIQPV) is interaction with EED. Ser75 carries an O-linked (GlcNAc) serine glycan. Ser76 carries the phosphoserine modification. The interval 180 to 222 (QYNDDDDDDDGDDPEEREEKQKDLEDHRDDKESRPPRKFPSDK) is disordered. Residues 182–195 (NDDDDDDDGDDPEE) are compositionally biased toward acidic residues. The segment covering 196 to 222 (REEKQKDLEDHRDDKESRPPRKFPSDK) has biased composition (basic and acidic residues). Residues 329 to 522 (EGAKEFAAAL…SSNHVYNYQP (194 aa)) are interaction with CDYL. Residue Thr339 is modified to Phosphothreonine. The tract at residues 340-426 (AERIKTPPKR…PIKMKPNIEP (87 aa)) is disordered. Thr345 carries the phosphothreonine; by CDK1 and CDK2 modification. Positions 345–357 (TPPKRPGGRRRGR) are enriched in basic residues. A phosphoserine mark is found at Ser363 and Ser366. Thr367 carries the phosphothreonine modification. Residues 374 to 385 (ESKDTDSDREAG) are compositionally biased toward basic and acidic residues. Thr487 bears the Phosphothreonine mark. Residues 503-605 (CRKIQLKKDG…SKNVSCKNCS (103 aa)) enclose the CXC domain. The region spanning 612-727 (KHLLLAPSDV…TGEELFFDYR (116 aa)) is the SET domain. Lys634 participates in a covalent cross-link: Glycyl lysine isopeptide (Lys-Gly) (interchain with G-Cter in SUMO2).

The protein belongs to the class V-like SAM-binding methyltransferase superfamily. Histone-lysine methyltransferase family. EZ subfamily. As to quaternary structure, component of the PRC2/EED-EZH2 complex, which includes EED, EZH2, SUZ12, RBBP4 and RBBP7 and possibly AEBP2. The minimum components required for methyltransferase activity of the PRC2/EED-EZH2 complex are EED, EZH2 and SUZ12. The PRC2 complex may also interact with DNMT1, DNMT3A, DNMT3B and PHF1 via the EZH2 subunit and with SIRT1 via the SUZ12 subunit. Interacts with HDAC1 and HDAC2. Binds ATRX via the SET domain. Interacts with PRAME. Interacts with CDYL. Interacts with CLOCK, BMAL1 and CRY1. Interacts with DNMT3L; the interaction is direct. Interacts with EZHIP; the interaction blocks EZH2 methyltransferase activity. Interacts with ZNF263; recruited to the SIX3 promoter along with other proteins involved in chromatin modification and transcriptional corepression where it contributes to transcriptional repression. Interacts with ARMC12. Interacts with ZMYND8; the interaction is dependent on the presence of chromatin. Interacts with DDX18; this interaction inhibits the PRC2 complex. In terms of processing, phosphorylated by AKT1. Phosphorylation by AKT1 reduces methyltransferase activity. Phosphorylation at Thr-345 by CDK1 and CDK2 promotes maintenance of H3K27me3 levels at EZH2-target loci, thus leading to epigenetic gene silencing. Sumoylated. Post-translationally, glycosylated: O-GlcNAcylation at Ser-75 by OGT increases stability of EZH2 and facilitates the formation of H3K27me3 by the PRC2/EED-EZH2 complex. As to expression, in the ovary, expressed in primordial follicles and oocytes and also in external follicle cells (at protein level). Expressed in many tissues. Overexpressed in numerous tumor types including carcinomas of the breast, colon, larynx, lymphoma and testis.

It is found in the nucleus. It carries out the reaction L-lysyl(27)-[histone H3] + 3 S-adenosyl-L-methionine = N(6),N(6),N(6)-trimethyl-L-lysyl(27)-[histone H3] + 3 S-adenosyl-L-homocysteine + 3 H(+). Its function is as follows. Polycomb group (PcG) protein. Catalytic subunit of the PRC2/EED-EZH2 complex, which methylates 'Lys-9' (H3K9me) and 'Lys-27' (H3K27me) of histone H3, leading to transcriptional repression of the affected target gene. Able to mono-, di- and trimethylate 'Lys-27' of histone H3 to form H3K27me1, H3K27me2 and H3K27me3, respectively. Displays a preference for substrates with less methylation, loses activity when progressively more methyl groups are incorporated into H3K27, H3K27me0 &gt; H3K27me1 &gt; H3K27me2. Compared to EZH1-containing complexes, it is more abundant in embryonic stem cells and plays a major role in forming H3K27me3, which is required for embryonic stem cell identity and proper differentiation. The PRC2/EED-EZH2 complex may also serve as a recruiting platform for DNA methyltransferases, thereby linking two epigenetic repression systems. Genes repressed by the PRC2/EED-EZH2 complex include HOXC8, HOXA9, MYT1, CDKN2A and retinoic acid target genes. EZH2 can also methylate non-histone proteins such as the transcription factor GATA4 and the nuclear receptor RORA. Regulates the circadian clock via histone methylation at the promoter of the circadian genes. Essential for the CRY1/2-mediated repression of the transcriptional activation of PER1/2 by the CLOCK-BMAL1 heterodimer; involved in the di and trimethylation of 'Lys-27' of histone H3 on PER1/2 promoters which is necessary for the CRY1/2 proteins to inhibit transcription. This is Histone-lysine N-methyltransferase EZH2 from Homo sapiens (Human).